The following is a 269-amino-acid chain: Shikimate dehydrogenase (NADP(+)) (269 aa).

Shikimate-binding positions include 17–19 (SKS) and Thr64. The Proton acceptor role is filled by Lys68. Glu80 lines the NADP(+) pocket. Asn89 and Asp105 together coordinate shikimate. Residues 130 to 134 (GAGGA), 154 to 159 (NRTHAK), and Met213 contribute to the NADP(+) site. Tyr215 contributes to the shikimate binding site. Gly237 provides a ligand contact to NADP(+).

Belongs to the shikimate dehydrogenase family. In terms of assembly, homodimer.

The catalysed reaction is shikimate + NADP(+) = 3-dehydroshikimate + NADPH + H(+). The protein operates within metabolic intermediate biosynthesis; chorismate biosynthesis; chorismate from D-erythrose 4-phosphate and phosphoenolpyruvate: step 4/7. Its function is as follows. Involved in the biosynthesis of the chorismate, which leads to the biosynthesis of aromatic amino acids. Catalyzes the reversible NADPH linked reduction of 3-dehydroshikimate (DHSA) to yield shikimate (SA). This chain is Shikimate dehydrogenase (NADP(+)), found in Neisseria pharyngis.